We begin with the raw amino-acid sequence, 132 residues long: Small ribosomal subunit protein uS8 (132 aa).

It belongs to the universal ribosomal protein uS8 family. As to quaternary structure, part of the 30S ribosomal subunit. Contacts proteins S5 and S12.

Its function is as follows. One of the primary rRNA binding proteins, it binds directly to 16S rRNA central domain where it helps coordinate assembly of the platform of the 30S subunit. The sequence is that of Small ribosomal subunit protein uS8 from Rickettsia conorii (strain ATCC VR-613 / Malish 7).